Consider the following 344-residue polypeptide: Uroporphyrinogen decarboxylase (344 aa).

Substrate contacts are provided by residues 23-27 (RQAGR), D73, Y149, T204, and H321.

The protein belongs to the uroporphyrinogen decarboxylase family. Homodimer.

The protein localises to the cytoplasm. It carries out the reaction uroporphyrinogen III + 4 H(+) = coproporphyrinogen III + 4 CO2. Its pathway is porphyrin-containing compound metabolism; protoporphyrin-IX biosynthesis; coproporphyrinogen-III from 5-aminolevulinate: step 4/4. Catalyzes the decarboxylation of four acetate groups of uroporphyrinogen-III to yield coproporphyrinogen-III. This chain is Uroporphyrinogen decarboxylase, found in Francisella tularensis subsp. novicida (strain U112).